The primary structure comprises 259 residues: NADP-dependent 3-hydroxy acid dehydrogenase (259 aa).

Isoleucine 11 is an NADP(+) binding site. Serine 42 is modified (phosphoserine). Threonine 43 carries the post-translational modification Phosphothreonine. Residues aspartate 65, asparagine 92, arginine 126, tyrosine 158, lysine 162, and valine 191 each contribute to the NADP(+) site. The Proton acceptor role is filled by tyrosine 158. Lysine 162 acts as the Lowers pKa of active site Tyr in catalysis.

Belongs to the short-chain dehydrogenases/reductases (SDR) family. In terms of assembly, homotetramer.

The protein resides in the cytoplasm. It is found in the nucleus. It carries out the reaction L-allo-threonine + NADP(+) = aminoacetone + CO2 + NADPH. In terms of biological role, NADP-dependent dehydrogenase with broad substrate specificity acting on 3-hydroxy acids. Catalyzes the NADP-dependent oxidation of L-allo-threonine to L-2-amino-3-keto-butyrate, which is spontaneously decarboxylated into aminoacetone. Also acts on D-threonine, L-serine, D-serine, D-3-hydroxyisobutyrate, L-3-hydroxyisobutyrate, D-glycerate and L-glycerate. This Schizosaccharomyces pombe (strain 972 / ATCC 24843) (Fission yeast) protein is NADP-dependent 3-hydroxy acid dehydrogenase.